A 168-amino-acid chain; its full sequence is Signal peptidase I V (168 aa).

Topologically, residues 1-6 (MKKRFW) are cytoplasmic. A helical transmembrane segment spans residues 7-26 (FLAGVVSVVLAIQVKNAVFI). Residues 27–168 (DYKVEGVSMN…NIVGVISDAE (142 aa)) are Extracellular-facing. Active-site residues include Ser34 and Lys75.

The protein belongs to the peptidase S26 family.

The protein localises to the cell membrane. It catalyses the reaction Cleavage of hydrophobic, N-terminal signal or leader sequences from secreted and periplasmic proteins.. This chain is Signal peptidase I V (sipV), found in Bacillus subtilis (strain 168).